A 426-amino-acid chain; its full sequence is Interferon regulatory factor 8 (426 aa).

The IRF tryptophan pentad repeat DNA-binding region spans Gly-7 to Pro-114.

This sequence belongs to the IRF family. In terms of assembly, interacts (via C-terminus) with TRIM21 (via C-terminus). Interacts with the BATF-JUNB heterodimer. Interacts with BATF (via bZIP domain); the interaction is direct. Interacts with COPS2. Interacts with SPI1. Post-translationally, ubiquitinated. Ubiquitination by TRIM21 in macrophages, a process that is strongly increased upon interferon gamma stimulation, leds to the enhanced transcriptional activity of target cytokine genes. Ubiquitination leads to its degradation by the proteasome. Sumoylated with SUMO3. Desumoylated by SENP1. Predominantly expressed in lymphoid tissues.

Its subcellular location is the nucleus. It localises to the cytoplasm. In terms of biological role, transcription factor that specifically binds to the upstream regulatory region of type I interferon (IFN) and IFN-inducible MHC class I genes (the interferon consensus sequence (ICS)). Can both act as a transcriptional activator or repressor. Plays a negative regulatory role in cells of the immune system. Involved in CD8(+) dendritic cell differentiation by forming a complex with the BATF-JUNB heterodimer in immune cells, leading to recognition of AICE sequence (5'-TGAnTCA/GAAA-3'), an immune-specific regulatory element, followed by cooperative binding of BATF and IRF8 and activation of genes. Required for the development of plasmacytoid dendritic cells (pDCs), which produce most of the type I IFN in response to viral infection. Positively regulates macroautophagy in dendritic cells. Acts as a transcriptional repressor of osteoclast differentiation factors such as NFATC1 and EEIG1. In Homo sapiens (Human), this protein is Interferon regulatory factor 8.